Here is a 217-residue protein sequence, read N- to C-terminus: Large ribosomal subunit protein uL4 (217 aa).

The segment at 42–100 is disordered; that stretch reads RAAARQGTHSTKTRGDVSGGGRKPYRQKGTGRARQGSTRAPQFTGGGVVHGPKPRDYSQ.

This sequence belongs to the universal ribosomal protein uL4 family. Part of the 50S ribosomal subunit.

In terms of biological role, one of the primary rRNA binding proteins, this protein initially binds near the 5'-end of the 23S rRNA. It is important during the early stages of 50S assembly. It makes multiple contacts with different domains of the 23S rRNA in the assembled 50S subunit and ribosome. Its function is as follows. Forms part of the polypeptide exit tunnel. In Mycolicibacterium paratuberculosis (strain ATCC BAA-968 / K-10) (Mycobacterium paratuberculosis), this protein is Large ribosomal subunit protein uL4.